Here is a 68-residue protein sequence, read N- to C-terminus: Neuronal regeneration-related protein (68 aa).

The tract at residues 21-54 (MEGRLPKGRLPVPKEVNRKKNDETNAASLTPLGS) is disordered. Residues 44 to 54 (TNAASLTPLGS) show a composition bias toward polar residues.

Interacts with the latency-associated peptides (LAP) of TGFB1 and TGFB2; the interaction results in a decrease in TGFB autoinduction. Interacts with FLNA. Phosphorylated on Ser-59. Phosphorylation decreases stability and activity.

It localises to the cytoplasm. Functionally, may have roles in neural function and cellular differentiation. Ectopic expression promotes axonal regeneration, induces differentiation of fibroblast into myofibroblast, induces myofibroblast ameboid migration, augments motility of gliomas, and increases retinoic-acid regulation of lipid-droplet biogenesis. Down-regulates the expression of TGFB1 and TGFB2 but not of TGFB3. May play a role in the regulation of alveolar generation. The polypeptide is Neuronal regeneration-related protein (NREP) (Macaca fascicularis (Crab-eating macaque)).